The following is a 412-amino-acid chain: DNA primase DnaG (412 aa).

The Toprim domain maps to 165 to 243; it reads PELIIVEGRA…KLDYVARAPT (79 aa). Residues Glu171, Asp216, and Asp218 each contribute to the Mg(2+) site.

The protein belongs to the archaeal DnaG primase family. Forms a ternary complex with MCM helicase and DNA. Component of the archaeal exosome complex. The cofactor is Mg(2+).

It carries out the reaction ssDNA + n NTP = ssDNA/pppN(pN)n-1 hybrid + (n-1) diphosphate.. Functionally, RNA polymerase that catalyzes the synthesis of short RNA molecules used as primers for DNA polymerase during DNA replication. Also part of the exosome, which is a complex involved in RNA degradation. Acts as a poly(A)-binding protein that enhances the interaction between heteromeric, adenine-rich transcripts and the exosome. This chain is DNA primase DnaG, found in Sulfolobus acidocaldarius (strain ATCC 33909 / DSM 639 / JCM 8929 / NBRC 15157 / NCIMB 11770).